The following is a 180-amino-acid chain: Acireductone dioxygenase (180 aa).

Positions 97, 99, 103, and 141 each coordinate Fe(2+). Residues histidine 97, histidine 99, glutamate 103, and histidine 141 each coordinate Ni(2+).

The protein belongs to the acireductone dioxygenase (ARD) family. As to quaternary structure, monomer. Fe(2+) serves as cofactor. The cofactor is Ni(2+).

It carries out the reaction 1,2-dihydroxy-5-(methylsulfanyl)pent-1-en-3-one + O2 = 3-(methylsulfanyl)propanoate + CO + formate + 2 H(+). The enzyme catalyses 1,2-dihydroxy-5-(methylsulfanyl)pent-1-en-3-one + O2 = 4-methylsulfanyl-2-oxobutanoate + formate + 2 H(+). The protein operates within amino-acid biosynthesis; L-methionine biosynthesis via salvage pathway; L-methionine from S-methyl-5-thio-alpha-D-ribose 1-phosphate: step 5/6. Functionally, catalyzes 2 different reactions between oxygen and the acireductone 1,2-dihydroxy-3-keto-5-methylthiopentene (DHK-MTPene) depending upon the metal bound in the active site. Fe-containing acireductone dioxygenase (Fe-ARD) produces formate and 2-keto-4-methylthiobutyrate (KMTB), the alpha-ketoacid precursor of methionine in the methionine recycle pathway. Ni-containing acireductone dioxygenase (Ni-ARD) produces methylthiopropionate, carbon monoxide and formate, and does not lie on the methionine recycle pathway. This Enterobacter sp. (strain 638) protein is Acireductone dioxygenase.